Here is a 164-residue protein sequence, read N- to C-terminus: UPF0114 protein YqhA (164 aa).

A run of 3 helical transmembrane segments spans residues 10-32 (YASR…ALAL), 53-75 (LILV…MVMF), and 136-155 (LMWY…VMGY).

It belongs to the UPF0114 family.

Its subcellular location is the cell membrane. The polypeptide is UPF0114 protein YqhA (Salmonella typhi).